A 268-amino-acid polypeptide reads, in one-letter code: tRNA pseudouridine synthase A (268 aa).

The active-site Nucleophile is Asp-52. Residue Tyr-113 participates in substrate binding.

Belongs to the tRNA pseudouridine synthase TruA family. As to quaternary structure, homodimer.

The enzyme catalyses uridine(38/39/40) in tRNA = pseudouridine(38/39/40) in tRNA. In terms of biological role, formation of pseudouridine at positions 38, 39 and 40 in the anticodon stem and loop of transfer RNAs. The sequence is that of tRNA pseudouridine synthase A from Rhizobium leguminosarum bv. trifolii (strain WSM2304).